The chain runs to 633 residues: NADPH-dependent diflavin oxidoreductase 1 (633 aa).

The 145-residue stretch at 5–149 (CTIIYATESG…EVEKWSQELI (145 aa)) folds into the Flavodoxin-like domain. FMN contacts are provided by residues 11–16 (TESGTS), 58–61 (STTG), and Asp131. One can recognise an FAD-binding FR-type domain in the interval 196-442 (TQFYKSKLKV…FIKESGARLP (247 aa)). Residues 377-380 (RPFS) and 412-415 (GLCS) each bind FAD. Residues Thr456, 520–521 (SR), 528–532 (KVYVQ), and Asp565 each bind NADP(+). The interval 580–610 (KNNNNNNNNNNNNNNNNNNNNNNNNNDDENN) is disordered. A compositionally biased stretch (low complexity) spans 581-604 (NNNNNNNNNNNNNNNNNNNNNNNN). An FAD-binding site is contributed by Trp633.

Belongs to the NADPH-dependent diflavin oxidoreductase NDOR1 family. This sequence in the N-terminal section; belongs to the flavodoxin family. It in the C-terminal section; belongs to the flavoprotein pyridine nucleotide cytochrome reductase family. It depends on FAD as a cofactor. FMN serves as cofactor.

The protein localises to the cytoplasm. The catalysed reaction is 2 oxidized [2Fe-2S]-[protein] + NADPH = 2 reduced [2Fe-2S]-[protein] + NADP(+) + H(+). Its function is as follows. NADPH-dependent reductase which is a central component of the cytosolic iron-sulfur (Fe-S) protein assembly (CIA) machinery. Transfers electrons from NADPH via its FAD and FMN prosthetic groups to the [2Fe-2S] cluster of the anamorsin/DRE2 homolog, another key component of the CIA machinery. In turn, this reduced cluster provides electrons for assembly of cytosolic iron-sulfur cluster proteins. This is NADPH-dependent diflavin oxidoreductase 1 (redC) from Dictyostelium discoideum (Social amoeba).